The following is a 624-amino-acid chain: Alpha-mannosidase I MNS4 (624 aa).

Residues 1-7 (MDSNFKW) lie on the Cytoplasmic side of the membrane. The helical; Signal-anchor for type II membrane protein transmembrane segment at 8-28 (LLFAILISLTFSGFVLHHGVL) threads the bilayer. Over 29-624 (AESVKPDEAK…ETDDQRSYSS (596 aa)) the chain is Lumenal. N-linked (GlcNAc...) asparagine glycosylation occurs at Asn115. The active-site Proton donor is the Glu122. The active site involves Asp262. The active-site Proton donor is the Glu355. Residue Glu376 is part of the active site. Thr466 contributes to the Ca(2+) binding site. Residue Asn494 is glycosylated (N-linked (GlcNAc...) asparagine). The tract at residues 574–624 (QTVEKRPQEEEGFTSQSEPIMTISGGSSNDQTGQELTLLESETDDQRSYSS) is disordered. Positions 586 to 608 (FTSQSEPIMTISGGSSNDQTGQE) are enriched in polar residues.

Belongs to the glycosyl hydrolase 47 family. It depends on Ca(2+) as a cofactor.

The protein resides in the endoplasmic reticulum membrane. It participates in protein modification; protein glycosylation. Functionally, can convert Man(9)GlcNAc(2) and Man(8)GlcNAc(2) into N-glycans with a terminal alpha-1,6-linked Man residue in the C-branch. Functions in the formation of unique N-glycan structures that are specifically recognized by components of the endoplasmic reticulum-associated degradation (ERAD) machinery, which leads to the degradation of misfolded glycoproteins. Most likely generates N-glycan signal on misfolded glycoproteins that is subsequently recognized by OS9. Required for ERAD of the heavily glycosylated and misfolded BRI1 variants BRI1-5 and BRI1-9. Does not seem to play role in N-glycan processing of correctly folded proteins destined for secretion. This is Alpha-mannosidase I MNS4 (MNS4) from Arabidopsis thaliana (Mouse-ear cress).